The sequence spans 359 residues: Putative B3 domain-containing protein At3g24850 (359 aa).

Disordered stretches follow at residues 92 to 111 (DSEI…LQNS) and 159 to 192 (EKME…KRTG). The span at 100–111 (TSDSQMKTLQNS) shows a compositional bias: polar residues. Residues 250-351 (FNNLLQNDFL…VLCFAMEQSS (102 aa)) constitute a DNA-binding region (TF-B3).

Its subcellular location is the nucleus. This is Putative B3 domain-containing protein At3g24850 from Arabidopsis thaliana (Mouse-ear cress).